The chain runs to 635 residues: Extracellular metalloproteinase 1 (635 aa).

The N-terminal stretch at 1 to 19 (MHGLLLAAGLLSLPLHVLA) is a signal peptide. Positions 20 to 246 (HPQPSTSTSL…VHNVVDYVAH (227 aa)) are excised as a propeptide. N-linked (GlcNAc...) asparagine glycosylation is present at asparagine 287. Histidine 430 is a Zn(2+) binding site. Glutamate 431 is an active-site residue. Histidine 434 lines the Zn(2+) pocket. Residues asparagine 475, asparagine 594, and asparagine 623 are each glycosylated (N-linked (GlcNAc...) asparagine).

This sequence belongs to the peptidase M36 family. Requires Zn(2+) as cofactor.

The protein localises to the secreted. Secreted metalloproteinase probably acting as a virulence factor. This Trichophyton tonsurans (Scalp ringworm fungus) protein is Extracellular metalloproteinase 1 (MEP1).